Here is a 315-residue protein sequence, read N- to C-terminus: Aspartate carbamoyltransferase catalytic subunit (315 aa).

Positions 55 and 56 each coordinate carbamoyl phosphate. Position 83 (Lys-83) interacts with L-aspartate. Carbamoyl phosphate contacts are provided by Arg-105, His-138, and Gln-141. Arg-171 and Arg-225 together coordinate L-aspartate. Gly-266 and Pro-267 together coordinate carbamoyl phosphate.

Belongs to the aspartate/ornithine carbamoyltransferase superfamily. ATCase family. As to quaternary structure, heterododecamer (2C3:3R2) of six catalytic PyrB chains organized as two trimers (C3), and six regulatory PyrI chains organized as three dimers (R2).

The enzyme catalyses carbamoyl phosphate + L-aspartate = N-carbamoyl-L-aspartate + phosphate + H(+). The protein operates within pyrimidine metabolism; UMP biosynthesis via de novo pathway; (S)-dihydroorotate from bicarbonate: step 2/3. Catalyzes the condensation of carbamoyl phosphate and aspartate to form carbamoyl aspartate and inorganic phosphate, the committed step in the de novo pyrimidine nucleotide biosynthesis pathway. The sequence is that of Aspartate carbamoyltransferase catalytic subunit from Mycolicibacterium vanbaalenii (strain DSM 7251 / JCM 13017 / BCRC 16820 / KCTC 9966 / NRRL B-24157 / PYR-1) (Mycobacterium vanbaalenii).